Reading from the N-terminus, the 366-residue chain is MDFLNSSDQNLTSEELLNRMPSKILVSLTLSGLALMTTTINCLVITAIIVTRKLHHPANYLICSLAVTDFLVAVLVMPFSIVYIVRESWIMGQGLCDLWLSVDIICCTCSILHLSAIALDRYRAITDAVEYARKRTPRHAGITITTVWVISVFISVPPLFWRHQGNSRDDQCIIKHDHIVSTIYSTFGAFYIPLVLILILYYKIYRAARTLYHKRQASRMIKEELNGQVLLESGEKSIKLVSTSYMLEKSLSDPSTDFDRIHSTVKSPRSELKHEKSWRRQKISGTRERKAATTLGLILGAFVICWLPFFVKELVVNICEKCKISEEMSNFLAWLGYLNSLINPLIYTIFNEDFKKAFQKLVRCRN.

Over 1-24 the chain is Extracellular; it reads MDFLNSSDQNLTSEELLNRMPSKI. Residues asparagine 5 and asparagine 10 are each glycosylated (N-linked (GlcNAc...) asparagine). The chain crosses the membrane as a helical span at residues 25–49; it reads LVSLTLSGLALMTTTINCLVITAII. Topologically, residues 50–59 are cytoplasmic; it reads VTRKLHHPAN. The chain crosses the membrane as a helical span at residues 60–81; that stretch reads YLICSLAVTDFLVAVLVMPFSI. Residues 82-96 lie on the Extracellular side of the membrane; that stretch reads VYIVRESWIMGQGLC. Cysteines 96 and 172 form a disulfide. Residues 97–119 form a helical membrane-spanning segment; the sequence is DLWLSVDIICCTCSILHLSAIAL. Residues aspartate 103 and cysteine 107 each coordinate serotonin. The DRY motif; important for ligand-induced conformation changes motif lies at 120–122; the sequence is DRY. The Cytoplasmic portion of the chain corresponds to 120–139; it reads DRYRAITDAVEYARKRTPRH. Residues 140 to 159 form a helical membrane-spanning segment; sequence AGITITTVWVISVFISVPPL. At 160-178 the chain is on the extracellular side; sequence FWRHQGNSRDDQCIIKHDH. Residues 179 to 202 traverse the membrane as a helical segment; sequence IVSTIYSTFGAFYIPLVLILILYY. Residues 203–291 lie on the Cytoplasmic side of the membrane; it reads KIYRAARTLY…KISGTRERKA (89 aa). Residues 292-315 traverse the membrane as a helical segment; sequence ATTLGLILGAFVICWLPFFVKELV. Residues 316-327 are Extracellular-facing; it reads VNICEKCKISEE. The chain crosses the membrane as a helical span at residues 328–350; the sequence is MSNFLAWLGYLNSLINPLIYTIF. The short motif at 343-347 is the NPxxY motif; important for ligand-induced conformation changes and signaling element; the sequence is NPLIY. Residues 351–366 are Cytoplasmic-facing; the sequence is NEDFKKAFQKLVRCRN.

The protein belongs to the G-protein coupled receptor 1 family.

It is found in the cell membrane. G-protein coupled receptor for 5-hydroxytryptamine (serotonin). Also functions as a receptor for various alkaloids and psychoactive substances. Ligand binding causes a conformation change that triggers signaling via guanine nucleotide-binding proteins (G proteins) and modulates the activity of downstream effectors, such as adenylate cyclase. HTR1F is coupled to G(i)/G(o) G alpha proteins and mediates inhibitory neurotransmission by inhibiting adenylate cyclase activity. This Rattus norvegicus (Rat) protein is 5-hydroxytryptamine receptor 1F (Htr1f).